The chain runs to 145 residues: Brain and acute leukemia cytoplasmic protein (145 aa).

Gly2 carries N-myristoyl glycine lipidation. A lipid anchor (S-palmitoyl cysteine) is attached at Cys3. The tract at residues 3-35 (CGGSRADAIEPRYYESWTRETESTWLTYTDSDA) is interaction with CAMK2A. The disordered stretch occupies residues 36–113 (LPSAAATDSG…GLWTTEAKRD (78 aa)). The span at 83–106 (CGTQCPNSQSLSSGPLTQKQNGLW) shows a compositional bias: polar residues.

In terms of assembly, interacts with CAMK2A. Post-translationally, palmitoylation and myristoylation target the protein to the lipid rafts. As to expression, predominantly expressed in the brain (at protein level). Within the brain, found in most of forebrain structures, including the cerebral cortex, hippocampal formation, olfactory bulb, anterior olfactory nuclei, piriform cortex, tenia tecta and amygdaloid nuclei. Not detected in glial cells.

It is found in the cytoplasm. The protein resides in the synapse. Its subcellular location is the synaptosome. It localises to the membrane raft. The protein localises to the postsynaptic density. In terms of biological role, may play a synaptic role at the postsynaptic lipid rafts possibly through interaction with CAMK2A. This chain is Brain and acute leukemia cytoplasmic protein (Baalc), found in Rattus norvegicus (Rat).